Here is a 113-residue protein sequence, read N- to C-terminus: MTSEQFEYHLTGKEILEKEFKTGLRGYSPEDVDEFLDMVIKDYSTFTQEIEALQAENIRLVQELDNAPLRTSTQPAPTFQAAAQPAGTTNFDILKRLSNLEKHVFGNKLDDNE.

The stretch at 36–68 (LDMVIKDYSTFTQEIEALQAENIRLVQELDNAP) forms a coiled coil.

Belongs to the GpsB family. As to quaternary structure, forms polymers through the coiled coil domains. Interacts with PBP1, MreC and EzrA.

The protein resides in the cytoplasm. Divisome component that associates with the complex late in its assembly, after the Z-ring is formed, and is dependent on DivIC and PBP2B for its recruitment to the divisome. Together with EzrA, is a key component of the system that regulates PBP1 localization during cell cycle progression. Its main role could be the removal of PBP1 from the cell pole after pole maturation is completed. Also contributes to the recruitment of PBP1 to the division complex. Not essential for septum formation. The sequence is that of Cell cycle protein GpsB from Listeria monocytogenes serotype 4b (strain CLIP80459).